A 663-amino-acid chain; its full sequence is Glucans biosynthesis glucosyltransferase H (663 aa).

6 consecutive transmembrane segments (helical) span residues 64–86 (WMLGLMTIAMGVAGWKASFDTIA), 101–123 (LAPLFLALSLWFCTALIGFVVLM), 413–435 (LVIGVLSYALSPLWFFCLSAGLI), 470–492 (AWAMIITFVLLFGPKILGAILVL), 558–580 (EAWAAMGWISLSGLILAASFWFT), and 584–606 (LTATAPILAGLVLAVPLTMLGAH).

It belongs to the glycosyltransferase 2 family. OpgH subfamily.

It localises to the cell inner membrane. It participates in glycan metabolism; osmoregulated periplasmic glucan (OPG) biosynthesis. In terms of biological role, involved in the biosynthesis of osmoregulated periplasmic glucans (OPGs). This Caulobacter vibrioides (strain ATCC 19089 / CIP 103742 / CB 15) (Caulobacter crescentus) protein is Glucans biosynthesis glucosyltransferase H.